A 445-amino-acid chain; its full sequence is Ribosomal protein uS12 methylthiotransferase RimO (445 aa).

The MTTase N-terminal domain occupies 10-120; that stretch reads PKVGFVSLGC…VVNAVHEVVP (111 aa). Residues Cys19, Cys55, Cys84, Cys153, Cys157, and Cys160 each coordinate [4Fe-4S] cluster. Residues 139–378 enclose the Radical SAM core domain; sequence LTPRHYAYLK…AHQQEISSAR (240 aa). The TRAM domain occupies 380 to 445; that stretch reads QQRIGKEIEV…DEYDLWAETL (66 aa).

Belongs to the methylthiotransferase family. RimO subfamily. [4Fe-4S] cluster serves as cofactor.

The protein resides in the cytoplasm. It catalyses the reaction L-aspartate(89)-[ribosomal protein uS12]-hydrogen + (sulfur carrier)-SH + AH2 + 2 S-adenosyl-L-methionine = 3-methylsulfanyl-L-aspartate(89)-[ribosomal protein uS12]-hydrogen + (sulfur carrier)-H + 5'-deoxyadenosine + L-methionine + A + S-adenosyl-L-homocysteine + 2 H(+). Catalyzes the methylthiolation of an aspartic acid residue of ribosomal protein uS12. This chain is Ribosomal protein uS12 methylthiotransferase RimO, found in Pseudomonas fluorescens (strain ATCC BAA-477 / NRRL B-23932 / Pf-5).